Here is a 318-residue protein sequence, read N- to C-terminus: Bis(5'-nucleosyl)-tetraphosphatase, symmetrical (318 aa).

Residues 269 to 318 form a disordered region; sequence PGREVTGPAPVARAPRRPRERLGRQRSRGNRGNAGNTAVPAKPPVDTPQD. The segment covering 282-297 has biased composition (basic residues); that stretch reads APRRPRERLGRQRSRG. The segment covering 309-318 has biased composition (pro residues); that stretch reads AKPPVDTPQD.

It belongs to the Ap4A hydrolase family.

It catalyses the reaction P(1),P(4)-bis(5'-adenosyl) tetraphosphate + H2O = 2 ADP + 2 H(+). Its function is as follows. Hydrolyzes diadenosine 5',5'''-P1,P4-tetraphosphate to yield ADP. This chain is Bis(5'-nucleosyl)-tetraphosphatase, symmetrical, found in Xanthomonas oryzae pv. oryzae (strain MAFF 311018).